An 84-amino-acid polypeptide reads, in one-letter code: ATP synthase subunit c (84 aa).

A run of 2 helical transmembrane segments spans residues 21–38 and 60–80; these read ALGA…IGKI and MIII…VCLL.

Belongs to the ATPase C chain family. In terms of assembly, F-type ATPases have 2 components, F(1) - the catalytic core - and F(0) - the membrane proton channel. F(1) has five subunits: alpha(3), beta(3), gamma(1), delta(1), epsilon(1). F(0) has three main subunits: a(1), b(2) and c(10-14). The alpha and beta chains form an alternating ring which encloses part of the gamma chain. F(1) is attached to F(0) by a central stalk formed by the gamma and epsilon chains, while a peripheral stalk is formed by the delta and b chains.

Its subcellular location is the cell inner membrane. Functionally, f(1)F(0) ATP synthase produces ATP from ADP in the presence of a proton or sodium gradient. F-type ATPases consist of two structural domains, F(1) containing the extramembraneous catalytic core and F(0) containing the membrane proton channel, linked together by a central stalk and a peripheral stalk. During catalysis, ATP synthesis in the catalytic domain of F(1) is coupled via a rotary mechanism of the central stalk subunits to proton translocation. Its function is as follows. Key component of the F(0) channel; it plays a direct role in translocation across the membrane. A homomeric c-ring of between 10-14 subunits forms the central stalk rotor element with the F(1) delta and epsilon subunits. The chain is ATP synthase subunit c from Phocaeicola vulgatus (strain ATCC 8482 / DSM 1447 / JCM 5826 / CCUG 4940 / NBRC 14291 / NCTC 11154) (Bacteroides vulgatus).